The sequence spans 423 residues: TNF receptor-associated factor family protein DDB_G0277243 (423 aa).

Residues 20–66 (CSICVDPVLNSLPLEQHQALSCKNGHLLCQACWGKQLALRKECCICK) form an RING-type; degenerate zinc finger. TRAF-type zinc fingers lie at residues 124-179 (SHLR…NDMP) and 180-237 (THIE…CYLS). One can recognise an MATH domain in the interval 287-411 (RYKGNWTIEN…DGKLTINIDV (125 aa)).

This sequence belongs to the TNF receptor-associated factor family. A subfamily.

It localises to the cytoplasm. Functionally, probable adapter protein and signal transducer that links members of the tumor necrosis factor receptor family to different signaling pathways by association with the receptor cytoplasmic domain and kinases. The polypeptide is TNF receptor-associated factor family protein DDB_G0277243 (Dictyostelium discoideum (Social amoeba)).